A 3253-amino-acid chain; its full sequence is tRNA nuclease CdiA (3253 aa).

An N-terminal signal peptide occupies residues 1–32 (MHQPPVRFPYRLLSYLISTIIAGQPLLPAVGA). A two-partner system transport domain (TPS) region spans residues 36–322 (PQNGAGMDKA…AGGNLSVTGT (287 aa)). Positions 351–1384 (GELTAGQNAM…ITIRTGHLLN (1034 aa)) are FHA-1. The segment at 1385-1656 (QREGINETKS…DLASGIVEGN (272 aa)) is receptor binding domain (RBD). Residues 1657–1841 (YPLPSGNNGY…LSPKDVTLQN (185 aa)) form a YP domain region. A periplasmic FHA-1 repeat (pFR) region spans residues 1842-1902 (GSIISGQNVH…GLKAMGDINN (61 aa)). Positions 1944-2548 (TYTGSIASVS…TSKYDSKQTS (605 aa)) are FHA-2. Disordered regions lie at residues 2228-2252 (GSSK…TIGS), 2362-2410 (TGDP…GKNR), 2483-2503 (GSEK…GKTV), and 2687-2712 (IRDR…DSIS). Composition is skewed to polar residues over residues 2240–2252 (GTTQ…TIGS), 2368–2403 (TGVS…NLSV), and 2490–2503 (TEWT…GKTV). The interval 2888–2930 (SDLSEEQKQTISTLATVSAGLAGGLTGNSSASAAVGAQSGKNA) is pretoxin (PT) domain. The VDNN CT cleavage motif signature appears at 2931–2934 (VDNN). A C-terminal effector domain (CT) region spans residues 2931–3253 (VDNNYLSVSE…TGIVSNFHPK (323 aa)).

The protein in the N-terminal section; belongs to the CdiA toxin family. This sequence in the C-terminal section; belongs to the bacterial EndoU family. In terms of assembly, forms a 1:1 complex with cognate immunity protein CdiI-STECO31. TRNase activity is metal-independent. is required as a cofactor. The CT domain is cleaved upon binding to receptor Tsx on target cells.

The protein localises to the secreted. Its subcellular location is the target cell. It is found in the target cell cytoplasm. Toxic component of a toxin-immunity protein module, which functions as a cellular contact-dependent growth inhibition (CDI) system. CDI modules allow bacteria to communicate with and inhibit the growth of closely related neighboring target bacteria in a contact-dependent fashion (target cell counts decrease 1000- to 10000-fold with this CDI). Uses outer membrane nucleoside transporter Tsx on target cells as a receptor. Gains access to the cytoplasm of target cells by using integral inner membrane protein PTS system glucose-specific EIICB component (ptsG). Targeting of the C-terminal domain (CT) domain (residues 2931-3253) in the absence of immunity protein inhibits cell growth and causes tRNA(UUC-Glu) cleavage; expression of cognate immunity protein CdiI-STECO31 neutralizes growth inhibition leaving tRNA(UUC-Glu) is intact, whereas non-cognate immunity proteins do not confer protection. The CT domain cleaves tRNA; it is most active against tRNA(UUC-Glu), but also has modest activity against tRNA(GUC-Asp), tRNA(UUG-Gln), tRNA(CCC-Gly), tRNA(UCC-Gly), tRNA(GCC-Gly), tRNA(UUU-Lys), tRNA(GGU-Thr) and tRNA(CCA-Trp); tRNA cleavage is inhibited by cognate immunity protein CdiI. Cleavage of tRNA(UUC-Glu) occurs in the anticodon loop between cytosine(37) and 2-methyladenosine(38) (C37-m2A38) and probably also occurs in the anticodon loop of other tRNAs as well. Functionally, the CdiA protein is thought to be exported from the cell through the central lumen of CdiB, the other half of its two-partner system (TPS). The TPS domain probably remains associated with CdiB while the FHA-1 domain forms an extended filament (33 nm long) with the receptor-binding domain (RBD) at its extremity; in the secretion arrested state the C-terminus of the RBD and YP domains form a hairpin-like structure as the FHA-2, PT and CT domains are periplasmic. The YP domain is probably responsible for this arrest at the point where it re-enters the host cell periplasm. Upon binding to a target cell outer membrane receptor (Tsx for this CDI) a signal is transmitted to activate secretion. The filament becomes about 5 nm longer, the rest of CdiA is secreted and the FHA-2 domain becomes stably associated with the target cell's outer membrane where it facilitates entry of the toxic CT domain into the target cell periplasm. From there the toxic CT domain is cleaved and gains access to the target cell cytoplasm via an inner membrane protein (PTS system glucose-specific EIICB component, ptsG for this CDI). This is tRNA nuclease CdiA from Escherichia coli (strain STEC_O31).